The primary structure comprises 133 residues: Ribonuclease P protein component (133 aa).

It belongs to the RnpA family. Consists of a catalytic RNA component (M1 or rnpB) and a protein subunit.

It carries out the reaction Endonucleolytic cleavage of RNA, removing 5'-extranucleotides from tRNA precursor.. Functionally, RNaseP catalyzes the removal of the 5'-leader sequence from pre-tRNA to produce the mature 5'-terminus. It can also cleave other RNA substrates such as 4.5S RNA. The protein component plays an auxiliary but essential role in vivo by binding to the 5'-leader sequence and broadening the substrate specificity of the ribozyme. This chain is Ribonuclease P protein component, found in Corynebacterium glutamicum (strain ATCC 13032 / DSM 20300 / JCM 1318 / BCRC 11384 / CCUG 27702 / LMG 3730 / NBRC 12168 / NCIMB 10025 / NRRL B-2784 / 534).